The sequence spans 218 residues: ATP-dependent Clp protease proteolytic subunit 2 (218 aa).

The active-site Nucleophile is the serine 114. Residue histidine 139 is part of the active site.

It belongs to the peptidase S14 family. As to quaternary structure, fourteen ClpP subunits assemble into 2 heptameric rings which stack back to back to give a disk-like structure with a central cavity, resembling the structure of eukaryotic proteasomes.

It is found in the cytoplasm. The catalysed reaction is Hydrolysis of proteins to small peptides in the presence of ATP and magnesium. alpha-casein is the usual test substrate. In the absence of ATP, only oligopeptides shorter than five residues are hydrolyzed (such as succinyl-Leu-Tyr-|-NHMec, and Leu-Tyr-Leu-|-Tyr-Trp, in which cleavage of the -Tyr-|-Leu- and -Tyr-|-Trp bonds also occurs).. Cleaves peptides in various proteins in a process that requires ATP hydrolysis. Has a chymotrypsin-like activity. Plays a major role in the degradation of misfolded proteins. Probably partially responsible for degradation of ECF sigma factor SigR prime. This Streptomyces coelicolor (strain ATCC BAA-471 / A3(2) / M145) protein is ATP-dependent Clp protease proteolytic subunit 2.